The chain runs to 473 residues: Membrane-bound acylglycerophosphatidylinositol O-acyltransferase MBOAT7 (473 aa).

At 1 to 5 the chain is on the cytoplasmic side; sequence MTPEE. The helical transmembrane segment at 6–22 threads the bilayer; it reads WTYLMVLLISIPVGFLF. The Lumenal portion of the chain corresponds to 23 to 33; the sequence is KKAGPGLKRWG. The helical transmembrane segment at 34 to 57 threads the bilayer; the sequence is AAAVGLGLTLFTCGPHSLHSLITI. The Cytoplasmic segment spans residues 58 to 73; that stretch reads LGTWALIQAQPCSCHA. A helical membrane pass occupies residues 74 to 93; it reads LALAWTFSYLLFFRALSLLG. Topologically, residues 94-194 are lumenal; that stretch reads LPTPTPFTNA…VPSLRPLLRR (101 aa). The chain crosses the membrane as a helical span at residues 195-212; the sequence is AWPAPLFGLLFLLSSHLF. Residues 213 to 231 are Cytoplasmic-facing; sequence PLEAVREDAFYARPLPTRL. A helical transmembrane segment spans residues 232–261; that stretch reads FYMIPVFFAFRMRFYVAWIAAECGCIAAGF. Topologically, residues 262–426 are lumenal; that stretch reads GAYPVAAKAR…LSMADTLRYW (165 aa). Asparagine 321 is a glycosylation site (N-linked (GlcNAc...) asparagine). A helical membrane pass occupies residues 427-447; sequence ASIYFWVHFLALACLGLGLVL. At 448-473 the chain is on the cytoplasmic side; sequence GGGSPSKRKTPSQATSSQAKEKLREE. The tract at residues 451–473 is disordered; it reads SPSKRKTPSQATSSQAKEKLREE.

The protein belongs to the membrane-bound acyltransferase family. As to quaternary structure, interacts with SPTSSA; the interaction facilitates MBOAT7 location to mitochondria-associated membranes (MAMs).

The protein resides in the endoplasmic reticulum membrane. It catalyses the reaction a 1-acyl-sn-glycero-3-phospho-(1D-myo-inositol) + an acyl-CoA = a 1,2-diacyl-sn-glycero-3-phospho-(1D-myo-inositol) + CoA. It carries out the reaction 1-octadecanoyl-sn-glycero-3-phospho-(1D-myo-inositol) + (5Z,8Z,11Z,14Z)-eicosatetraenoyl-CoA = 1-octadecanoyl-2-(5Z,8Z,11Z,14Z-eicosatetraenoyl)-sn-glycero-3-phospho-(1D-myo-inositol) + CoA. The enzyme catalyses a 1-acyl-sn-glycero-3-phospho-(1D-myo-inositol) + (5Z,8Z,11Z,14Z)-eicosatetraenoyl-CoA = a 1-acyl-2-(5Z,8Z,11Z,14Z-eicosatetraenoyl)-sn-glycero-3-phospho-(1D-myo-inositol) + CoA. The catalysed reaction is (5Z,8Z,11Z,14Z)-eicosatetraenoyl-CoA + 1-hexadecanoyl-sn-glycero-3-phosphocholine = 1-hexadecanoyl-2-(5Z,8Z,11Z,14Z-eicosatetraenoyl)-sn-glycero-3-phosphocholine + CoA. Its pathway is lipid metabolism; phospholipid metabolism. Functionally, acyltransferase which catalyzes the transfer of an acyl group from an acyl-CoA to a lysophosphatidylinositol (1-acylglycerophosphatidylinositol or LPI) leading to the production of a phosphatidylinositol (1,2-diacyl-sn-glycero-3-phosphoinositol or PI) and participates in the reacylation step of the phospholipid remodeling pathway also known as the Lands cycle. Prefers arachidonoyl-CoA as the acyl donor, thus contributing to the regulation of free levels arachidonic acid in cell. In liver, participates in the regulation of triglyceride metabolism through the phosphatidylinositol acyl-chain remodeling regulation. In Mus musculus (Mouse), this protein is Membrane-bound acylglycerophosphatidylinositol O-acyltransferase MBOAT7.